Here is a 186-residue protein sequence, read N- to C-terminus: ATP synthase subunit delta (186 aa).

This sequence belongs to the ATPase delta chain family. As to quaternary structure, F-type ATPases have 2 components, F(1) - the catalytic core - and F(0) - the membrane proton channel. F(1) has five subunits: alpha(3), beta(3), gamma(1), delta(1), epsilon(1). F(0) has three main subunits: a(1), b(2) and c(10-14). The alpha and beta chains form an alternating ring which encloses part of the gamma chain. F(1) is attached to F(0) by a central stalk formed by the gamma and epsilon chains, while a peripheral stalk is formed by the delta and b chains.

Its subcellular location is the cell inner membrane. F(1)F(0) ATP synthase produces ATP from ADP in the presence of a proton or sodium gradient. F-type ATPases consist of two structural domains, F(1) containing the extramembraneous catalytic core and F(0) containing the membrane proton channel, linked together by a central stalk and a peripheral stalk. During catalysis, ATP synthesis in the catalytic domain of F(1) is coupled via a rotary mechanism of the central stalk subunits to proton translocation. Its function is as follows. This protein is part of the stalk that links CF(0) to CF(1). It either transmits conformational changes from CF(0) to CF(1) or is implicated in proton conduction. In Chelativorans sp. (strain BNC1), this protein is ATP synthase subunit delta.